The primary structure comprises 246 residues: Small ribosomal subunit protein uS3 (246 aa).

The region spanning 19–98 is the KH type-2 domain; it reads IDEWLAQNFY…NPMLDARVQA (80 aa). Residues 218 to 246 are disordered; that stretch reads LQEETASTLREHMEAARPGEEHEEDREES. A compositionally biased stretch (basic and acidic residues) spans 226–237; the sequence is LREHMEAARPGE.

Belongs to the universal ribosomal protein uS3 family. In terms of assembly, part of the 30S ribosomal subunit.

Functionally, binds the lower part of the 30S subunit head. This chain is Small ribosomal subunit protein uS3, found in Aeropyrum pernix (strain ATCC 700893 / DSM 11879 / JCM 9820 / NBRC 100138 / K1).